The sequence spans 443 residues: D-lactate dehydrogenase (443 aa).

At 1–182 (MSWIDELSKI…GGKTIKNSSG (182 aa)) the chain is on the extracellular side. One can recognise an FAD-binding PCMH-type domain in the interval 32–209 (RAAENFVVVK…TKATIRLFPQ (178 aa)). A helical transmembrane segment spans residues 183-203 (YSLLHLLVGSEGTLAVITKAT). Over 204-383 (IRLFPQMRDM…WEKSYFEFRK (180 aa)) the chain is Cytoplasmic. The chain crosses the membrane as a helical span at residues 384-404 (SLLSLAVSLGGVISGEHGIGA). The Extracellular portion of the chain corresponds to 405 to 443 (VKLSELEELFPEQFELMRQIKLLFDPKNILNPGKVVRKL).

The protein belongs to the FAD-binding oxidoreductase/transferase type 4 family. The cofactor is FAD. Zn(2+) serves as cofactor.

It is found in the cell membrane. It catalyses the reaction (R)-lactate + A = pyruvate + AH2. Catalyzes the dehydrogenation of (R)-lactate (D-lactate) to pyruvate. Is likely involved in the utilization of D-lactate as a sole source for both carbon and electrons for dissimilatory sulfate reduction. Cannot use L-lactate as substrate, and NAD(+), horse cytochrome c, methylene blue or dimethylnaphthoquinone as acceptors. Active in vitro with artificial electron acceptors such as 2,6-dichlorophenolindophenol (DCPIP); the physiological acceptor is not known, but potential acceptors include cytochromes or quinones. The protein is D-lactate dehydrogenase of Archaeoglobus fulgidus (strain ATCC 49558 / DSM 4304 / JCM 9628 / NBRC 100126 / VC-16).